Reading from the N-terminus, the 58-residue chain is Large ribosomal subunit protein uL30 (58 aa).

The protein belongs to the universal ribosomal protein uL30 family. In terms of assembly, part of the 50S ribosomal subunit.

This chain is Large ribosomal subunit protein uL30, found in Cytophaga hutchinsonii (strain ATCC 33406 / DSM 1761 / CIP 103989 / NBRC 15051 / NCIMB 9469 / D465).